Here is a 701-residue protein sequence, read N- to C-terminus: DNA ligase A (701 aa).

Residues 1 to 23 (MSEKATGEVEAELPEHPDADERR) form a disordered region. NAD(+)-binding positions include 49 to 53 (DAEFD), 99 to 100 (SL), and Glu-129. Lys-131 acts as the N6-AMP-lysine intermediate in catalysis. Residues Arg-152, Glu-192, Lys-308, and Lys-332 each coordinate NAD(+). Cys-426, Cys-429, Cys-445, and Cys-451 together coordinate Zn(2+). In terms of domain architecture, BRCT spans 615–701 (SIERTLEGLS…EQGPPVEPAE (87 aa)).

The protein belongs to the NAD-dependent DNA ligase family. LigA subfamily. It depends on Mg(2+) as a cofactor. Mn(2+) serves as cofactor.

The catalysed reaction is NAD(+) + (deoxyribonucleotide)n-3'-hydroxyl + 5'-phospho-(deoxyribonucleotide)m = (deoxyribonucleotide)n+m + AMP + beta-nicotinamide D-nucleotide.. Its function is as follows. DNA ligase that catalyzes the formation of phosphodiester linkages between 5'-phosphoryl and 3'-hydroxyl groups in double-stranded DNA using NAD as a coenzyme and as the energy source for the reaction. It is essential for DNA replication and repair of damaged DNA. Probably the only ligase required for non-homologous end joining (NHEJ) repair of 3-overhangs. The polypeptide is DNA ligase A (Mycolicibacterium smegmatis (strain ATCC 700084 / mc(2)155) (Mycobacterium smegmatis)).